The primary structure comprises 466 residues: Teichoic acids export ATP-binding protein TagH (466 aa).

One can recognise an ABC transporter domain in the interval 27-249; that stretch reads NKAKSLIGSN…YEKFVQWFKK (223 aa). Residue 63-70 participates in ATP binding; it reads GLNGAGKS. The segment at 250 to 466 is unknown; that stretch reads LPKKEQEKFK…TTEQSDGANQ (217 aa). Disordered stretches follow at residues 356–403 and 439–466; these read NMTS…SNQN and IHPG…GANQ. Residues 373 to 384 are compositionally biased toward basic residues; that stretch reads PKKKVSQAKKTT. A compositionally biased stretch (low complexity) spans 385 to 403; the sequence is KVSSTQKNTSSSSSTSNQN. The LysM domain maps to 403–447; it reads NTYIVQAGDSLSIIAENHGYSVEEIQQVNPGVDFSVIHPGQEINL. The segment covering 449–466 has biased composition (polar residues); the sequence is EPTTSANSTTEQSDGANQ.

It belongs to the ABC transporter superfamily. Teichoic acids exporter (TC 3.A.1.104.1) family. In terms of assembly, the complex is composed of two ATP-binding proteins (TagH) and two transmembrane proteins (TagG).

The protein localises to the cell membrane. The catalysed reaction is ATP + H2O + teichoic acidSide 1 = ADP + phosphate + teichoic acidSide 2.. Part of the ABC transporter complex TagGH involved in teichoic acids export. Responsible for energy coupling to the transport system. The sequence is that of Teichoic acids export ATP-binding protein TagH from Lactococcus lactis subsp. lactis (strain IL1403) (Streptococcus lactis).